A 407-amino-acid chain; its full sequence is MRILAMTRAHNAGRTLAATLDSLAVFSDDIYVIDDRSTDDTAEILANHPAVTNVVRARPDLPPTPWLIPESAGLELLYRMADFCRPDWVMMVDADWLVETDIDLRAVLARTPDDIVALMCPMVSRWDDPEYPDLIPVMGTAEALRGPLWRWYPGLRAGGKLMHNPHWPANITDHGRIGQLPGVRLVHSGWSTLAERILRVEHYLRLDPDYRFNFGVAYDRSLLFGYALDEVDLLKADYRRRIRGDFDPLEPGGRLPIDREPRAIGRGYGPHAGGFHPGVDFATDPGTPVYAVASGAVSAIDEVDGLVSLTIARCELDVVYVFRPGDEGRLVLGDRIAAGAQLGTIGAQGESADGYLHFEVRTQDGHVNPVRYLANMGLRPWPPPGRLRAVSGSYPPATPCTITAEDR.

A signal peptide spans 1-27; that stretch reads MRILAMTRAHNAGRTLAATLDSLAVFS.

This is an uncharacterized protein from Mycobacterium bovis (strain ATCC BAA-935 / AF2122/97).